Here is a 645-residue protein sequence, read N- to C-terminus: Cysteine-rich receptor-like protein kinase 19 (645 aa).

Residues 1–20 (MSSLISFIFLFLFSSITASA) form the signal peptide. The Extracellular portion of the chain corresponds to 21–262 (QNTFYLYHNC…PRPGKGGNSS (242 aa)). Gnk2-homologous domains follow at residues 24-129 (FYLY…NRNI) and 135-239 (TDGG…NYAF). Residues Asn29, Asn39, Asn57, Asn101, Asn185, Asn241, and Asn260 are each glycosylated (N-linked (GlcNAc...) asparagine). A helical transmembrane segment spans residues 263–283 (VIIIAVVVPITVLFLLLVAVF). At 284-645 (SVRAKNKRTL…EASITRVTPR (362 aa)) the chain is on the cytoplasmic side. In terms of domain architecture, Protein kinase spans 326-603 (FLPINKLGQG…IVQMLTTSLI (278 aa)). Residues 332–340 (LGQGGFGEV) and Lys354 each bind ATP. At Tyr399 the chain carries Phosphotyrosine. Residue Asp451 is the Proton acceptor of the active site. Thr491 is subject to Phosphothreonine. At Tyr499 the chain carries Phosphotyrosine. The disordered stretch occupies residues 616 to 645 (RSKQEQAGPSIDSSTHCSVDEASITRVTPR). The span at 620-632 (EQAGPSIDSSTHC) shows a compositional bias: polar residues.

It belongs to the protein kinase superfamily. Ser/Thr protein kinase family. CRK subfamily. In terms of assembly, interacts with MWL1.

Its subcellular location is the membrane. The catalysed reaction is L-seryl-[protein] + ATP = O-phospho-L-seryl-[protein] + ADP + H(+). It catalyses the reaction L-threonyl-[protein] + ATP = O-phospho-L-threonyl-[protein] + ADP + H(+). This chain is Cysteine-rich receptor-like protein kinase 19 (CRK19), found in Arabidopsis thaliana (Mouse-ear cress).